We begin with the raw amino-acid sequence, 152 residues long: UPF0178 protein YE1167 (152 aa).

This sequence belongs to the UPF0178 family.

This chain is UPF0178 protein YE1167, found in Yersinia enterocolitica serotype O:8 / biotype 1B (strain NCTC 13174 / 8081).